The primary structure comprises 517 residues: NADH-quinone oxidoreductase subunit N (517 aa).

14 helical membrane passes run 14–34 (LAPT…EAFV), 40–60 (HMVQ…MVVV), 77–97 (GPAL…LLLI), 131–151 (ATEV…FVAA), 154–174 (LLTM…LCAL), 189–209 (YFLL…LVYG), 238–258 (VLLF…AAAA), 272–292 (PTPI…GALL), 306–326 (FTPI…VLAV), 334–354 (LLAY…LAPS), 362–382 (MFYL…VTLV), 404–424 (FYAG…LTSG), 451–471 (SMVL…SEPG), and 481–501 (GWLT…LGVV).

This sequence belongs to the complex I subunit 2 family. As to quaternary structure, NDH-1 is composed of 14 different subunits. Subunits NuoA, H, J, K, L, M, N constitute the membrane sector of the complex.

The protein resides in the cell membrane. It carries out the reaction a quinone + NADH + 5 H(+)(in) = a quinol + NAD(+) + 4 H(+)(out). Functionally, NDH-1 shuttles electrons from NADH, via FMN and iron-sulfur (Fe-S) centers, to quinones in the respiratory chain. The immediate electron acceptor for the enzyme in this species is believed to be a menaquinone. Couples the redox reaction to proton translocation (for every two electrons transferred, four hydrogen ions are translocated across the cytoplasmic membrane), and thus conserves the redox energy in a proton gradient. The sequence is that of NADH-quinone oxidoreductase subunit N from Salinispora arenicola (strain CNS-205).